The chain runs to 461 residues: Bifunctional protein HldE (461 aa).

Residues 1–312 (MLEFLSQQKP…IKSFNRVDFE (312 aa)) are ribokinase. 191–194 (NKKE) is a binding site for ATP. Aspartate 259 is a catalytic residue. Positions 334–461 (FTNGCFDIVH…KIIEKIKDKK (128 aa)) are cytidylyltransferase.

This sequence in the N-terminal section; belongs to the carbohydrate kinase PfkB family. The protein in the C-terminal section; belongs to the cytidylyltransferase family. Homodimer.

The enzyme catalyses D-glycero-beta-D-manno-heptose 7-phosphate + ATP = D-glycero-beta-D-manno-heptose 1,7-bisphosphate + ADP + H(+). It carries out the reaction D-glycero-beta-D-manno-heptose 1-phosphate + ATP + H(+) = ADP-D-glycero-beta-D-manno-heptose + diphosphate. It participates in nucleotide-sugar biosynthesis; ADP-L-glycero-beta-D-manno-heptose biosynthesis; ADP-L-glycero-beta-D-manno-heptose from D-glycero-beta-D-manno-heptose 7-phosphate: step 1/4. It functions in the pathway nucleotide-sugar biosynthesis; ADP-L-glycero-beta-D-manno-heptose biosynthesis; ADP-L-glycero-beta-D-manno-heptose from D-glycero-beta-D-manno-heptose 7-phosphate: step 3/4. In terms of biological role, catalyzes the phosphorylation of D-glycero-D-manno-heptose 7-phosphate at the C-1 position to selectively form D-glycero-beta-D-manno-heptose-1,7-bisphosphate. Functionally, catalyzes the ADP transfer from ATP to D-glycero-beta-D-manno-heptose 1-phosphate, yielding ADP-D-glycero-beta-D-manno-heptose. The chain is Bifunctional protein HldE from Campylobacter jejuni subsp. doylei (strain ATCC BAA-1458 / RM4099 / 269.97).